Consider the following 150-residue polypeptide: Globin-5 (150 aa).

Positions 11 to 150 (PLSAAEKTKI…MICILLRSAY (140 aa)) constitute a Globin domain. Heme b is bound by residues His74 and His106.

This sequence belongs to the globin family. In terms of assembly, monomer at high oxygen tension and high pH and dimeric at low oxygen tension and lower pH.

The chain is Globin-5 from Petromyzon marinus (Sea lamprey).